Consider the following 404-residue polypeptide: Probable tRNA sulfurtransferase (404 aa).

In terms of domain architecture, THUMP spans 60–165 (QPIVEALKLV…DEAAYISYEE (106 aa)). ATP-binding positions include 183 to 184 (ML), 208 to 209 (HF), R265, G287, and Q296.

It belongs to the ThiI family.

The protein localises to the cytoplasm. The enzyme catalyses [ThiI sulfur-carrier protein]-S-sulfanyl-L-cysteine + a uridine in tRNA + 2 reduced [2Fe-2S]-[ferredoxin] + ATP + H(+) = [ThiI sulfur-carrier protein]-L-cysteine + a 4-thiouridine in tRNA + 2 oxidized [2Fe-2S]-[ferredoxin] + AMP + diphosphate. The catalysed reaction is [ThiS sulfur-carrier protein]-C-terminal Gly-Gly-AMP + S-sulfanyl-L-cysteinyl-[cysteine desulfurase] + AH2 = [ThiS sulfur-carrier protein]-C-terminal-Gly-aminoethanethioate + L-cysteinyl-[cysteine desulfurase] + A + AMP + 2 H(+). It functions in the pathway cofactor biosynthesis; thiamine diphosphate biosynthesis. Its function is as follows. Catalyzes the ATP-dependent transfer of a sulfur to tRNA to produce 4-thiouridine in position 8 of tRNAs, which functions as a near-UV photosensor. Also catalyzes the transfer of sulfur to the sulfur carrier protein ThiS, forming ThiS-thiocarboxylate. This is a step in the synthesis of thiazole, in the thiamine biosynthesis pathway. The sulfur is donated as persulfide by IscS. In Streptococcus pyogenes serotype M2 (strain MGAS10270), this protein is Probable tRNA sulfurtransferase.